The following is a 156-amino-acid chain: Ribosomal RNA large subunit methyltransferase H (156 aa).

S-adenosyl-L-methionine contacts are provided by residues leucine 73, glycine 104, and 123 to 128; that span reads LSALTL.

Belongs to the RNA methyltransferase RlmH family. As to quaternary structure, homodimer.

The protein resides in the cytoplasm. The catalysed reaction is pseudouridine(1915) in 23S rRNA + S-adenosyl-L-methionine = N(3)-methylpseudouridine(1915) in 23S rRNA + S-adenosyl-L-homocysteine + H(+). Functionally, specifically methylates the pseudouridine at position 1915 (m3Psi1915) in 23S rRNA. The polypeptide is Ribosomal RNA large subunit methyltransferase H (Shewanella sp. (strain MR-7)).